The sequence spans 416 residues: Argininosuccinate synthase (416 aa).

Residues 11–19 (AYSGGLDTS) and A37 each bind ATP. Y88 contributes to the L-citrulline binding site. Y88 and Y114 each carry phosphotyrosine. Position 116–124 (116–124 (AHGATGKGN)) interacts with ATP. L-aspartate-binding residues include T120, N124, and D125. N124 provides a ligand contact to L-citrulline. Positions 128, 181, 190, 271, and 283 each coordinate L-citrulline. Residue S181 is modified to Phosphoserine.

The protein belongs to the argininosuccinate synthase family. Homotetramer.

The protein resides in the cytoplasm. Its subcellular location is the cytosol. It carries out the reaction L-citrulline + L-aspartate + ATP = 2-(N(omega)-L-arginino)succinate + AMP + diphosphate + H(+). The protein operates within amino-acid biosynthesis; L-arginine biosynthesis; L-arginine from L-ornithine and carbamoyl phosphate: step 2/3. It functions in the pathway nitrogen metabolism; urea cycle; (N(omega)-L-arginino)succinate from L-aspartate and L-citrulline: step 1/1. In terms of biological role, one of the enzymes of the urea cycle, the metabolic pathway transforming neurotoxic amonia produced by protein catabolism into inocuous urea in the liver of ureotelic animals. Catalyzes the formation of arginosuccinate from aspartate, citrulline and ATP and together with ASL it is responsible for the biosynthesis of arginine in most body tissues. The protein is Argininosuccinate synthase of Gallus gallus (Chicken).